A 320-amino-acid chain; its full sequence is Membrane protein insertase YidC 2 (320 aa).

The N-terminal stretch at M1–G23 is a signal peptide. Residue C24 is the site of N-palmitoyl cysteine attachment. C24 carries the S-diacylglycerol cysteine lipid modification. The next 5 membrane-spanning stretches (helical) occupy residues Y68–L88, M142–Y162, G178–I198, A217–V237, and L239–M259. Residues E270–K320 form a disordered region. Residues N294–S309 are compositionally biased toward basic and acidic residues.

It belongs to the OXA1/ALB3/YidC family. Type 2 subfamily.

Its subcellular location is the cell membrane. Required for the insertion and/or proper folding and/or complex formation of integral membrane proteins into the membrane. Involved in integration of membrane proteins that insert both dependently and independently of the Sec translocase complex, as well as at least some lipoproteins. In Lactococcus lactis subsp. lactis (strain IL1403) (Streptococcus lactis), this protein is Membrane protein insertase YidC 2.